Here is a 212-residue protein sequence, read N- to C-terminus: GrpE protein homolog, mitochondrial (212 aa).

It belongs to the GrpE family. As to quaternary structure, component of the PAM complex, at least composed of mtHsp70, MGE1, TIM44, PAM16, PAM17 and PAM18.

The protein localises to the mitochondrion matrix. Its function is as follows. Essential component of the PAM complex, a complex required for the translocation of transit peptide-containing proteins from the inner membrane into the mitochondrial matrix in an ATP-dependent manner. Seems to control the nucleotide-dependent binding of SSC1 to substrate proteins. The polypeptide is GrpE protein homolog, mitochondrial (mge1) (Eremothecium gossypii (strain ATCC 10895 / CBS 109.51 / FGSC 9923 / NRRL Y-1056) (Yeast)).